Here is a 588-residue protein sequence, read N- to C-terminus: A-type ATP synthase subunit A (588 aa).

237-244 serves as a coordination point for ATP; that stretch reads GPFGSGKT.

Belongs to the ATPase alpha/beta chains family. As to quaternary structure, has multiple subunits with at least A(3), B(3), C, D, E, F, H, I and proteolipid K(x).

It is found in the cell membrane. It carries out the reaction ATP + H2O + 4 H(+)(in) = ADP + phosphate + 5 H(+)(out). Its function is as follows. Component of the A-type ATP synthase that produces ATP from ADP in the presence of a proton gradient across the membrane. The A chain is the catalytic subunit. This Methanoregula boonei (strain DSM 21154 / JCM 14090 / 6A8) protein is A-type ATP synthase subunit A.